The primary structure comprises 295 residues: Indole-3-glycerol phosphate synthase (295 aa).

This sequence belongs to the TrpC family.

It carries out the reaction 1-(2-carboxyphenylamino)-1-deoxy-D-ribulose 5-phosphate + H(+) = (1S,2R)-1-C-(indol-3-yl)glycerol 3-phosphate + CO2 + H2O. Its pathway is amino-acid biosynthesis; L-tryptophan biosynthesis; L-tryptophan from chorismate: step 4/5. This chain is Indole-3-glycerol phosphate synthase, found in Synechococcus sp. (strain CC9605).